Consider the following 297-residue polypeptide: Pyridoxal 5'-phosphate synthase subunit PdxS (297 aa).

D27 provides a ligand contact to D-ribose 5-phosphate. K84 functions as the Schiff-base intermediate with D-ribose 5-phosphate in the catalytic mechanism. G156 provides a ligand contact to D-ribose 5-phosphate. R168 is a D-glyceraldehyde 3-phosphate binding site. Residues G217 and 238–239 (GS) contribute to the D-ribose 5-phosphate site.

It belongs to the PdxS/SNZ family. As to quaternary structure, in the presence of PdxT, forms a dodecamer of heterodimers.

It catalyses the reaction aldehydo-D-ribose 5-phosphate + D-glyceraldehyde 3-phosphate + L-glutamine = pyridoxal 5'-phosphate + L-glutamate + phosphate + 3 H2O + H(+). The protein operates within cofactor biosynthesis; pyridoxal 5'-phosphate biosynthesis. In terms of biological role, catalyzes the formation of pyridoxal 5'-phosphate from ribose 5-phosphate (RBP), glyceraldehyde 3-phosphate (G3P) and ammonia. The ammonia is provided by the PdxT subunit. Can also use ribulose 5-phosphate and dihydroxyacetone phosphate as substrates, resulting from enzyme-catalyzed isomerization of RBP and G3P, respectively. The chain is Pyridoxal 5'-phosphate synthase subunit PdxS from Corynebacterium diphtheriae (strain ATCC 700971 / NCTC 13129 / Biotype gravis).